The following is a 1148-amino-acid chain: Small G protein signaling modulator 1 (1148 aa).

In terms of domain architecture, RUN spans 36 to 190 (HEDSSHIISF…EYTKMKTADH (155 aa)). Residues 256–297 (LLYGKNNVLVQPRDDMEAVPGYLSLHQTADVMTLKWTPNQLM) are important for interaction with RAB9A and RAB9B. The segment at 301-350 (VGDLDYEKSVYWDYAMTIRLEEIVYLHCHQQVDSGGTVVLVSQDGIQRPP) is required for interaction with RAP family members. Disordered regions lie at residues 377–411 (DPPLWSQRGKGKVFPKLRKRSPQGSAESTSSDKDD), 700–830 (DSTI…PREE), and 871–894 (GWRSSETEKHGQADSEDNLSEEPE). A compositionally biased stretch (basic residues) spans 385–397 (GKGKVFPKLRKRS). A Rab-GAP TBC domain is found at 617-1081 (GIQPEIRKAV…LVWETIWAAK (465 aa)). Over residues 702 to 716 (TISNESSQSCSSGRQ) the composition is skewed to polar residues. The segment covering 742 to 751 (AEGRLEEKQP) has biased composition (basic and acidic residues). Residues 757–802 (NLVNGTCSPDSGHPSSHNFSSGLSEHSEPSLSTEDSVLDAQRNTPT) show a composition bias toward polar residues. Composition is skewed to basic and acidic residues over residues 805–816 (RPRDGSVDDRQS) and 871–883 (GWRSSETEKHGQA). A compositionally biased stretch (acidic residues) spans 884 to 894 (DSEDNLSEEPE).

Belongs to the RUTBC family. Interacts with RAB9A (GTP-bound form) and RAB9B (GTP-bound form); has much lower affinity for GDP-bound RAB9A and RAB9B. Interacts with RAB3A, RAB4A, RAB5A, RAB8A, RAB11A, RAP1A, RAP1B, RAP2A and RAP2B. No interaction with RAB27A. Mainly expressed in brain, heart and testis.

The protein resides in the golgi apparatus. It localises to the trans-Golgi network. Its subcellular location is the cytoplasmic vesicle membrane. The protein localises to the cytoplasm. Its function is as follows. Interacts with numerous Rab family members, functioning as Rab effector for some, and as GTPase activator for others. Promotes GTP hydrolysis by RAB34 and RAB36. Probably functions as a GTPase effector with RAB9A and RAB9B; does not stimulate GTP hydrolysis with RAB9A and RAB9B. This Homo sapiens (Human) protein is Small G protein signaling modulator 1 (SGSM1).